The chain runs to 119 residues: Large ribosomal subunit protein bL20 (119 aa).

It belongs to the bacterial ribosomal protein bL20 family.

In terms of biological role, binds directly to 23S ribosomal RNA and is necessary for the in vitro assembly process of the 50S ribosomal subunit. It is not involved in the protein synthesizing functions of that subunit. In Xanthomonas campestris pv. campestris (strain 8004), this protein is Large ribosomal subunit protein bL20.